The primary structure comprises 328 residues: 5,10-methylenetetrahydromethanopterin reductase (328 aa).

The protein belongs to the mer family.

It localises to the cytoplasm. The catalysed reaction is 5-methyl-5,6,7,8-tetrahydromethanopterin + oxidized coenzyme F420-(gamma-L-Glu)(n) + H(+) = 5,10-methylenetetrahydromethanopterin + reduced coenzyme F420-(gamma-L-Glu)(n). Its pathway is one-carbon metabolism; methanogenesis from CO(2); methyl-coenzyme M from 5,10-methylene-5,6,7,8-tetrahydromethanopterin: step 1/2. In terms of biological role, catalyzes the reversible reduction of methylene-H(4)MPT to methyl-H(4)MPT. The protein is 5,10-methylenetetrahydromethanopterin reductase of Methanosarcina mazei (strain ATCC BAA-159 / DSM 3647 / Goe1 / Go1 / JCM 11833 / OCM 88) (Methanosarcina frisia).